We begin with the raw amino-acid sequence, 556 residues long: Probable Xaa-Pro aminopeptidase SS1G_06948 (556 aa).

Residues Asp305, Asp316, Glu460, and Glu501 each coordinate Mn(2+).

The protein belongs to the peptidase M24B family. Mn(2+) is required as a cofactor.

The catalysed reaction is Release of any N-terminal amino acid, including proline, that is linked to proline, even from a dipeptide or tripeptide.. Functionally, catalyzes the removal of a penultimate prolyl residue from the N-termini of peptides. This Sclerotinia sclerotiorum (strain ATCC 18683 / 1980 / Ss-1) (White mold) protein is Probable Xaa-Pro aminopeptidase SS1G_06948.